Consider the following 249-residue polypeptide: Low affinity immunoglobulin gamma Fc region receptor III-A (249 aa).

Positions 1 to 16 are cleaved as a signal peptide; the sequence is MWQLLPSTALLLVASA. At 17–198 the chain is on the extracellular side; sequence RPQAADLPKA…IQGPPVPSTS (182 aa). Ig-like C2-type domains follow at residues 24–104 and 119–172; these read PKAV…LEVH and EGEP…YFCR. 2 disulfides stabilise this stretch: cysteine 47–cysteine 88 and cysteine 127–cysteine 171. 4 N-linked (GlcNAc...) asparagine glycosylation sites follow: asparagine 55, asparagine 63, asparagine 166, and asparagine 179. A helical transmembrane segment spans residues 199–219; sequence ALLPFWPHIPFAVVMALLFAV. The Cytoplasmic segment spans residues 220–249; it reads DTGLYFAMQRHLHNSKRAWENSKVSWKQDP.

Forms a heterooligomeric complex with ITAM-containing signaling subunits FCER1G. Interacts (via transmembrane domain) with signaling subunits; this interaction is a prerequisite for receptor complex expression on the cell surface and intracellular signal transduction. Binds the Fc region of antigen-complexed IgG.

It is found in the cell membrane. Its function is as follows. Receptor for the invariable Fc fragment of immunoglobulin gamma (IgG). Optimally activated upon binding of clustered antigen-IgG complexes displayed on cell surfaces, triggers lysis of antibody-coated cells, a process known as antibody-dependent cellular cytotoxicity (ADCC). Does not bind free monomeric IgG, thus avoiding inappropriate effector cell activation in the absence of antigenic trigger. Mediates IgG effector functions on natural killer (NK) cells. Binds antigen-IgG complexes generated upon infection and triggers NK cell-dependent cytokine production and degranulation to limit viral load and propagation. Fc-binding subunit that associates with FCER1G adapter to form functional signaling complexes. Following the engagement of antigen-IgG complexes, triggers phosphorylation of immunoreceptor tyrosine-based activation motif (ITAM)-containing adapter with subsequent activation of phosphatidylinositol 3-kinase signaling and sustained elevation of intracellular calcium that ultimately drive NK cell activation. Mediates enhanced ADCC in response to afucosylated IgGs. The protein is Low affinity immunoglobulin gamma Fc region receptor III-A of Mustela putorius furo (European domestic ferret).